We begin with the raw amino-acid sequence, 274 residues long: Lectizyme (274 aa).

Residues 1 to 16 (MKFFAVFALCVASVSA) form the signal peptide. In terms of domain architecture, Peptidase S1 spans 32-268 (IINGHEAEKG…FDKWIEDSIE (237 aa)). An intrachain disulfide couples Cys-57 to Cys-73. Active-site charge relay system residues include His-72 and Asp-119. Cystine bridges form between Cys-188-Cys-204 and Cys-215-Cys-244. Ser-219 serves as the catalytic Charge relay system.

Belongs to the peptidase S1 family. In terms of tissue distribution, expressed in the midgut.

The protein resides in the secreted. In terms of biological role, protein with lectin and protease activity involved in the establishment of trypanosome infections in tsetse flies. Binds D-glucosamine and agglutinates bloodstream-form trypanosomes and rabbit red blood cells. Capable of inducing transformation of bloodstream-form trypanosomes into procyclic (midgut) forms in vitro. In Glossina austeni (Savannah tsetse fly), this protein is Lectizyme (Gpl).